The chain runs to 224 residues: Deoxyribose-phosphate aldolase (224 aa).

Aspartate 98 (proton donor/acceptor) is an active-site residue. The Schiff-base intermediate with acetaldehyde role is filled by lysine 159. Lysine 189 serves as the catalytic Proton donor/acceptor.

Belongs to the DeoC/FbaB aldolase family. DeoC type 1 subfamily.

It is found in the cytoplasm. The catalysed reaction is 2-deoxy-D-ribose 5-phosphate = D-glyceraldehyde 3-phosphate + acetaldehyde. The protein operates within carbohydrate degradation; 2-deoxy-D-ribose 1-phosphate degradation; D-glyceraldehyde 3-phosphate and acetaldehyde from 2-deoxy-alpha-D-ribose 1-phosphate: step 2/2. Its function is as follows. Catalyzes a reversible aldol reaction between acetaldehyde and D-glyceraldehyde 3-phosphate to generate 2-deoxy-D-ribose 5-phosphate. This Methanothermobacter thermautotrophicus (strain ATCC 29096 / DSM 1053 / JCM 10044 / NBRC 100330 / Delta H) (Methanobacterium thermoautotrophicum) protein is Deoxyribose-phosphate aldolase.